The chain runs to 424 residues: Ornithine aminotransferase (424 aa).

At Lys-272 the chain carries N6-(pyridoxal phosphate)lysine. Lys-390 is covalently cross-linked (Glycyl lysine isopeptide (Lys-Gly) (interchain with G-Cter in ubiquitin)).

The protein belongs to the class-III pyridoxal-phosphate-dependent aminotransferase family. Requires pyridoxal 5'-phosphate as cofactor.

It is found in the cytoplasm. The enzyme catalyses a 2-oxocarboxylate + L-ornithine = L-glutamate 5-semialdehyde + an L-alpha-amino acid. The protein operates within amino-acid biosynthesis; L-proline biosynthesis; L-glutamate 5-semialdehyde from L-ornithine: step 1/1. With respect to regulation, by arginine and urea. In terms of biological role, catalyzes the transamination of ornithine into L-glutamate gamma-semialdehyde, the second step of arginine degradation. This is Ornithine aminotransferase (CAR2) from Saccharomyces cerevisiae (strain ATCC 204508 / S288c) (Baker's yeast).